Reading from the N-terminus, the 620-residue chain is uncharacterized protein (620 aa).

2 stretches are compositionally biased toward low complexity: residues 278 to 290 and 301 to 319; these read RPPSGSGEAAGEP and ASTASATAATSTRGPTRPT. Positions 278–620 are disordered; that stretch reads RPPSGSGEAA…KSQPPAAHTA (343 aa). Residues 336–411 are compositionally biased toward basic and acidic residues; the sequence is ARPESEEQTD…QESQVARRDE (76 aa). Composition is skewed to pro residues over residues 446-470 and 481-500; these read VPGPDPRLWVPPPHLLFPSPLPPMT and RCPPGPAEEPPTCRPRPPRP. Low complexity-rich tracts occupy residues 501 to 512 and 522 to 541; these read SSDTPLSAVSRP and TARVRFFLSSSSSSPSYSPA. Residues 542–551 show a composition bias toward pro residues; it reads PLSPPSPVSP. The span at 597–607 shows a compositional bias: low complexity; it reads SVPSSASPSAS.

It belongs to the herpesviridae US22 family.

This is an uncharacterized protein from Homo sapiens (Human).